We begin with the raw amino-acid sequence, 223 residues long: UPF0502 protein Sbal_1765 (223 aa).

It belongs to the UPF0502 family.

The sequence is that of UPF0502 protein Sbal_1765 from Shewanella baltica (strain OS155 / ATCC BAA-1091).